The chain runs to 609 residues: Proteasome-associated ATPase (609 aa).

The tract at residues 1 to 24 (MGESERSEAFGIPRDSPLSSGDAA) is disordered. A coiled-coil region spans residues 20-96 (SGDAAELEQL…LREEVDRLGQ (77 aa)). 296–301 (GCGKTL) provides a ligand contact to ATP. The interval 608 to 609 (YL) is docks into pockets in the proteasome alpha-ring.

Belongs to the AAA ATPase family. As to quaternary structure, homohexamer. Assembles into a hexameric ring structure that caps the 20S proteasome core. Strongly interacts with the prokaryotic ubiquitin-like protein Pup through a hydrophobic interface; the interacting region of ARC lies in its N-terminal coiled-coil domain. There is one Pup binding site per ARC hexamer ring. Upon ATP-binding, the C-terminus of ARC interacts with the alpha-rings of the proteasome core, possibly by binding to the intersubunit pockets.

The protein operates within protein degradation; proteasomal Pup-dependent pathway. ATPase which is responsible for recognizing, binding, unfolding and translocation of pupylated proteins into the bacterial 20S proteasome core particle. May be essential for opening the gate of the 20S proteasome via an interaction with its C-terminus, thereby allowing substrate entry and access to the site of proteolysis. Thus, the C-termini of the proteasomal ATPase may function like a 'key in a lock' to induce gate opening and therefore regulate proteolysis. The polypeptide is Proteasome-associated ATPase (Mycobacterium bovis (strain BCG / Pasteur 1173P2)).